Reading from the N-terminus, the 466-residue chain is Muscarinic acetylcholine receptor M2 (466 aa).

At 1 to 22 (MNNSTNSSNNSLALTSPYKTFE) the chain is on the extracellular side. 4 N-linked (GlcNAc...) asparagine glycosylation sites follow: asparagine 2, asparagine 3, asparagine 6, and asparagine 9. The chain crosses the membrane as a helical span at residues 23-45 (VVFIVLVAGSLSLVTIIGNILVM). Over 46–59 (VSIKVNRHLQTVNN) the chain is Cytoplasmic. The helical transmembrane segment at 60–80 (YFLFSLACADLIIGVFSMNLY) threads the bilayer. Topologically, residues 81–97 (TLYTVIGYWPLGPVVCD) are extracellular. A disulfide bridge links cysteine 96 with cysteine 176. Residues 98–119 (LWLALDYVVSNASVMNLLIISF) form a helical membrane-spanning segment. Positions 120–122 (DRY) match the Important for signaling motif. Topologically, residues 120–139 (DRYFCVTKPLTYPVKRTTKM) are cytoplasmic. Residues 140 to 162 (AGMMIAAAWVLSFILWAPAILFW) form a helical membrane-spanning segment. The Extracellular segment spans residues 163 to 184 (QFIVGVRTVEDGECYIQFFSNA). A helical membrane pass occupies residues 185–209 (AVTFGTAIAAFYLPVIIMTVLYWHI). Residues 210 to 387 (SRASKSRIKK…PPSREKKVTR (178 aa)) lie on the Cytoplasmic side of the membrane. The interval 218-355 (KKDKKEPVAN…VVGSSGQNGD (138 aa)) is disordered. At serine 232 the chain carries Phosphoserine. A compositionally biased stretch (basic and acidic residues) spans 254 to 270 (GLEHNKIQNGKAPRDPV). Polar residues-rich tracts occupy residues 284–293 (NDSTSVSAVA), 304–313 (DENTVSTSLG), and 334–353 (SDSCTPTNTTVEVVGSSGQN). Residues 388 to 410 (TILAILLAFIITWAPYNVMVLIN) form a helical membrane-spanning segment. The Extracellular portion of the chain corresponds to 411-418 (TFCAPCIP). Cysteine 413 and cysteine 416 form a disulfide bridge. Residues 419–442 (NTVWTIGYWLCYINSTINPACYAL) form a helical membrane-spanning segment. The short motif at 436 to 440 (NPACY) is the Important for signaling element. Residues 443–466 (CNATFKKTFKHLLMCHYKNIGATR) are Cytoplasmic-facing. A phosphothreonine mark is found at threonine 446, threonine 450, and threonine 465.

This sequence belongs to the G-protein coupled receptor 1 family. Muscarinic acetylcholine receptor subfamily. CHRM2 sub-subfamily. Interacts with ARRB1 and ARRB2. Interacts with RACK1; the interaction regulates CHRM2 internalization. Post-translationally, phosphorylated in response to agonist treatment.

It is found in the cell membrane. The protein resides in the postsynaptic cell membrane. Its function is as follows. The muscarinic acetylcholine receptor mediates various cellular responses, including inhibition of adenylate cyclase, breakdown of phosphoinositides and modulation of potassium channels through the action of G proteins. Primary transducing effect is adenylate cyclase inhibition. Signaling promotes phospholipase C activity, leading to the release of inositol trisphosphate (IP3); this then triggers calcium ion release into the cytosol. The chain is Muscarinic acetylcholine receptor M2 (CHRM2) from Homo sapiens (Human).